A 189-amino-acid chain; its full sequence is UPF0312 protein VPA0850 (189 aa).

Residues 1 to 22 (MKKSLFATGLAIAMALPLGAQA) form the signal peptide.

The protein belongs to the UPF0312 family. Type 1 subfamily.

It localises to the periplasm. In Vibrio parahaemolyticus serotype O3:K6 (strain RIMD 2210633), this protein is UPF0312 protein VPA0850.